The primary structure comprises 371 residues: Ubiquitin receptor RAD23b (371 aa).

Residues 1–79 (MKLTVKTLKG…LVVMLSKSKS (79 aa)) form the Ubiquitin-like domain. Positions 79-117 (SGGSAGQASVQTSSVSQPVSATTSSTKPAAPSTTQSSPV) are enriched in low complexity. Positions 79 to 142 (SGGSAGQASV…DTYGQAASTL (64 aa)) are disordered. Residues 128–142 (PAAQTDTYGQAASTL) are compositionally biased toward polar residues. The UBA 1 domain maps to 146 to 189 (SSLEQMVQQIMEMGGGSWDKETVTRALRAAYNNPERAVDYLYSG). An STI1 domain is found at 242–285 (GTLEFLRNNDQFQQLRTMVHSNPQILQPMLQELGKQNPQLLRLI). Residues 325 to 365 (PAEQEAIQRLEAMGFDRALVIEAFLACDRNEELAANYLLEN) form the UBA 2 domain.

Belongs to the RAD23 family. In terms of assembly, interacts with 'Lys-48'-linked polyubiquitin chains. Interacts with RPN10 via its ubiquitin-like domain. Interacts with UBQ1, UBQ2, UBQ5, UBQ7, UBQ10, UBQ11 and IAA16. Binds to RAD4. As to expression, widely expressed in the whole plant.

It localises to the nucleus. The protein localises to the cytoplasm. Functionally, may be involved in nucleotide excision repair. Binds and presumably selects ubiquitin-conjugates for destruction. Prefers multiubiquitin chains rather than single ubiquitins, with a binding affinity for 'Lys-48'-linked ubiquitin chains. Acts as a ubiquitin receptor that associates with the 26S proteasomal docking subunit RPN10 for the indirect recognition of ubiquitinated substrates of ubiquitin/26S proteasome-mediated proteolysis (UPP). Involved in UV tolerance in both roots and hypocotyls, specifically in dark conditions. The polypeptide is Ubiquitin receptor RAD23b (Arabidopsis thaliana (Mouse-ear cress)).